Consider the following 503-residue polypeptide: UDP-N-acetylmuramoylalanine--D-glutamate ligase (503 aa).

129-135 (GTNGKTT) is a binding site for ATP. Residues 284-305 (DSEAEGEGKPRRRKADATAQEA) form a disordered region.

This sequence belongs to the MurCDEF family.

It localises to the cytoplasm. The catalysed reaction is UDP-N-acetyl-alpha-D-muramoyl-L-alanine + D-glutamate + ATP = UDP-N-acetyl-alpha-D-muramoyl-L-alanyl-D-glutamate + ADP + phosphate + H(+). It participates in cell wall biogenesis; peptidoglycan biosynthesis. Functionally, cell wall formation. Catalyzes the addition of glutamate to the nucleotide precursor UDP-N-acetylmuramoyl-L-alanine (UMA). This chain is UDP-N-acetylmuramoylalanine--D-glutamate ligase, found in Cupriavidus pinatubonensis (strain JMP 134 / LMG 1197) (Cupriavidus necator (strain JMP 134)).